A 196-amino-acid chain; its full sequence is uncharacterized protein (196 aa).

It is found in the mitochondrion. This is an uncharacterized protein from Paramecium tetraurelia.